Consider the following 79-residue polypeptide: Acyl carrier protein (79 aa).

One can recognise a Carrier domain in the interval 2–77 (SDIEARVKKI…NAIDYANTHQ (76 aa)). S37 is modified (O-(pantetheine 4'-phosphoryl)serine).

It belongs to the acyl carrier protein (ACP) family. Post-translationally, 4'-phosphopantetheine is transferred from CoA to a specific serine of apo-ACP by AcpS. This modification is essential for activity because fatty acids are bound in thioester linkage to the sulfhydryl of the prosthetic group.

Its subcellular location is the cytoplasm. The protein operates within lipid metabolism; fatty acid biosynthesis. Carrier of the growing fatty acid chain in fatty acid biosynthesis. The polypeptide is Acyl carrier protein (Paracidovorax citrulli (strain AAC00-1) (Acidovorax citrulli)).